The primary structure comprises 175 residues: Shikimate kinase (175 aa).

12-17 (GAGKTT) contributes to the ATP binding site. Mg(2+) is bound at residue threonine 16. Positions 34, 58, and 80 each coordinate substrate. Arginine 117 provides a ligand contact to ATP. Arginine 136 lines the substrate pocket.

The protein belongs to the shikimate kinase family. As to quaternary structure, monomer. Requires Mg(2+) as cofactor.

It is found in the cytoplasm. The catalysed reaction is shikimate + ATP = 3-phosphoshikimate + ADP + H(+). The protein operates within metabolic intermediate biosynthesis; chorismate biosynthesis; chorismate from D-erythrose 4-phosphate and phosphoenolpyruvate: step 5/7. Catalyzes the specific phosphorylation of the 3-hydroxyl group of shikimic acid using ATP as a cosubstrate. The polypeptide is Shikimate kinase (Saccharopolyspora erythraea (strain ATCC 11635 / DSM 40517 / JCM 4748 / NBRC 13426 / NCIMB 8594 / NRRL 2338)).